The following is a 459-amino-acid chain: Phosphoglucosamine mutase (459 aa).

The active-site Phosphoserine intermediate is serine 112. Residues serine 112, aspartate 249, aspartate 251, and aspartate 253 each coordinate Mg(2+). Residue serine 112 is modified to Phosphoserine.

This sequence belongs to the phosphohexose mutase family. Mg(2+) serves as cofactor. Activated by phosphorylation.

It carries out the reaction alpha-D-glucosamine 1-phosphate = D-glucosamine 6-phosphate. In terms of biological role, catalyzes the conversion of glucosamine-6-phosphate to glucosamine-1-phosphate. The chain is Phosphoglucosamine mutase from Synechococcus sp. (strain RCC307).